The following is a 197-amino-acid chain: Large ribosomal subunit protein mL58 (197 aa).

The N-terminal 20 residues, 1-20 (MLFTIKPSFLKPVGFIQTRN), are a transit peptide targeting the mitochondrion.

Belongs to the mitochondrion-specific ribosomal protein mL58 family. As to quaternary structure, component of the mitochondrial large ribosomal subunit (mt-LSU). Mature yeast 74S mitochondrial ribosomes consist of a small (37S) and a large (54S) subunit. The 37S small subunit contains a 15S ribosomal RNA (15S mt-rRNA) and at least 32 different proteins. The 54S large subunit contains a 21S rRNA (21S mt-rRNA) and at least 45 different proteins.

The protein localises to the mitochondrion. Component of the mitochondrial ribosome (mitoribosome), a dedicated translation machinery responsible for the synthesis of mitochondrial genome-encoded proteins, including at least some of the essential transmembrane subunits of the mitochondrial respiratory chain. The mitoribosomes are attached to the mitochondrial inner membrane and translation products are cotranslationally integrated into the membrane. The sequence is that of Large ribosomal subunit protein mL58 (mrpl20) from Schizosaccharomyces pombe (strain 972 / ATCC 24843) (Fission yeast).